Consider the following 310-residue polypeptide: Manganese ABC transporter substrate-binding lipoprotein PsaA (310 aa).

A signal peptide spans 1–20 (MKKIASVLALFVALLFGLLA). A lipid anchor (N-palmitoyl cysteine) is attached at Cys-21. Cys-21 carries S-diacylglycerol cysteine lipidation. Residues His-68, His-140, Glu-206, and Asp-281 each contribute to the Mn(2+) site.

Belongs to the bacterial solute-binding protein 9 family. Lipoprotein receptor antigen (Lrai) subfamily.

The protein localises to the cell membrane. In terms of biological role, part of the ATP-binding cassette (ABC) transport system PsaABC involved in manganese import. Binds manganese with high affinity and specificity and delivers it to the membrane permease for translocation into the cytoplasm. Also acts as an adhesin which is involved on adherence to extracellular matrix. In Streptococcus pneumoniae, this protein is Manganese ABC transporter substrate-binding lipoprotein PsaA.